Reading from the N-terminus, the 51-residue chain is Large ribosomal subunit protein bL33 (51 aa).

It belongs to the bacterial ribosomal protein bL33 family.

The sequence is that of Large ribosomal subunit protein bL33 from Colwellia psychrerythraea (strain 34H / ATCC BAA-681) (Vibrio psychroerythus).